A 41-amino-acid chain; its full sequence is U-megalopygitoxin(4)-Mo5 (41 aa).

Positions 1–23 are cleaved as a signal peptide; the sequence is MKCSLLLVVFAAMVALFAAGTNA.

The protein belongs to the caterpillar 4 family. In terms of tissue distribution, expressed by the venom apparatus.

Its subcellular location is the secreted. Probable toxin. The polypeptide is U-megalopygitoxin(4)-Mo5 (Megalopyge opercularis (Southern flannel moth)).